We begin with the raw amino-acid sequence, 298 residues long: Ribosomal protein L11 methyltransferase (298 aa).

4 residues coordinate S-adenosyl-L-methionine: threonine 152, glycine 173, aspartate 195, and asparagine 234.

It belongs to the methyltransferase superfamily. PrmA family.

It is found in the cytoplasm. It carries out the reaction L-lysyl-[protein] + 3 S-adenosyl-L-methionine = N(6),N(6),N(6)-trimethyl-L-lysyl-[protein] + 3 S-adenosyl-L-homocysteine + 3 H(+). Functionally, methylates ribosomal protein L11. This Ralstonia nicotianae (strain ATCC BAA-1114 / GMI1000) (Ralstonia solanacearum) protein is Ribosomal protein L11 methyltransferase.